Reading from the N-terminus, the 589-residue chain is CTP synthase (589 aa).

An amidoligase domain region spans residues 1–281; it reads MPQSRTHSRT…DAYVVRQLGL (281 aa). Ser-23 contacts CTP. A UTP-binding site is contributed by Ser-23. ATP-binding positions include 24-29 and Asp-81; that span reads SLGKGL. Mg(2+)-binding residues include Asp-81 and Glu-155. CTP is bound by residues 162-164, 202-207, and Lys-238; these read DIE and KTKPTQ. UTP-binding positions include 202 to 207 and Lys-238; that span reads KTKPTQ. In terms of domain architecture, Glutamine amidotransferase type-1 spans 306–554; sequence RIALVGKYVD…VDAALRHKLE (249 aa). Position 369 (Gly-369) interacts with L-glutamine. Catalysis depends on Cys-396, which acts as the Nucleophile; for glutamine hydrolysis. L-glutamine is bound by residues 397–400, Glu-419, and Arg-480; that span reads LGLQ. Catalysis depends on residues His-527 and Glu-529. The disordered stretch occupies residues 562 to 589; it reads HGEERAAADDEIAESADRDEVASVDSAG.

Belongs to the CTP synthase family. In terms of assembly, homotetramer.

The enzyme catalyses UTP + L-glutamine + ATP + H2O = CTP + L-glutamate + ADP + phosphate + 2 H(+). It carries out the reaction L-glutamine + H2O = L-glutamate + NH4(+). The catalysed reaction is UTP + NH4(+) + ATP = CTP + ADP + phosphate + 2 H(+). Its pathway is pyrimidine metabolism; CTP biosynthesis via de novo pathway; CTP from UDP: step 2/2. With respect to regulation, allosterically activated by GTP, when glutamine is the substrate; GTP has no effect on the reaction when ammonia is the substrate. The allosteric effector GTP functions by stabilizing the protein conformation that binds the tetrahedral intermediate(s) formed during glutamine hydrolysis. Inhibited by the product CTP, via allosteric rather than competitive inhibition. Functionally, catalyzes the ATP-dependent amination of UTP to CTP with either L-glutamine or ammonia as the source of nitrogen. Regulates intracellular CTP levels through interactions with the four ribonucleotide triphosphates. This chain is CTP synthase, found in Rhodococcus opacus (strain B4).